The following is a 256-amino-acid chain: Small ribosomal subunit protein eS1B (256 aa).

Alanine 2 is modified (N-acetylalanine; partial).

It belongs to the eukaryotic ribosomal protein eS1 family. Component of the small ribosomal subunit. Mature ribosomes consist of a small (40S) and a large (60S) subunit. The 40S subunit contains about 33 different proteins and 1 molecule of RNA (18S). The 60S subunit contains about 49 different proteins and 3 molecules of RNA (25S, 5.8S and 5S).

The protein localises to the cytoplasm. The protein is Small ribosomal subunit protein eS1B of Scheffersomyces stipitis (strain ATCC 58785 / CBS 6054 / NBRC 10063 / NRRL Y-11545) (Yeast).